Consider the following 252-residue polypeptide: Thiamine thiazole synthase (252 aa).

NAD(+) is bound by residues S35, 54–55 (EK), G62, V126, and 152–154 (HVD). The Fe cation site is built by D154 and H169. An NAD(+)-binding site is contributed by M217. R227 serves as a coordination point for glycine.

This sequence belongs to the THI4 family. As to quaternary structure, homooctamer; tetramer of dimers. Fe(2+) serves as cofactor.

It carries out the reaction hydrogen sulfide + glycine + NAD(+) = ADP-5-ethyl-4-methylthiazole-2-carboxylate + nicotinamide + 3 H2O + H(+). The protein operates within cofactor biosynthesis; thiamine diphosphate biosynthesis. In terms of biological role, involved in the biosynthesis of the thiazole moiety of thiamine. Catalyzes the conversion of NAD and glycine to adenosine diphosphate 5-(2-hydroxyethyl)-4-methylthiazole-2-carboxylate (ADT), an adenylated thiazole intermediate, using free sulfide as a source of sulfur. The chain is Thiamine thiazole synthase from Pyrococcus furiosus (strain ATCC 43587 / DSM 3638 / JCM 8422 / Vc1).